Here is a 167-residue protein sequence, read N- to C-terminus: uncharacterized protein (167 aa).

2 consecutive transmembrane segments (helical) span residues 96-115 (YVPA…FNFY) and 119-138 (WGAL…IIAV).

It is found in the cell membrane. This is an uncharacterized protein from Bacillus subtilis (strain 168).